The chain runs to 548 residues: Probable malate:quinone oxidoreductase (548 aa).

It belongs to the MQO family. FAD is required as a cofactor.

It catalyses the reaction (S)-malate + a quinone = a quinol + oxaloacetate. The protein operates within carbohydrate metabolism; tricarboxylic acid cycle; oxaloacetate from (S)-malate (quinone route): step 1/1. In Escherichia coli O6:K15:H31 (strain 536 / UPEC), this protein is Probable malate:quinone oxidoreductase.